A 424-amino-acid chain; its full sequence is UDP-N-acetylglucosamine 1-carboxyvinyltransferase (424 aa).

22–23 provides a ligand contact to phosphoenolpyruvate; it reads KN. R95 lines the UDP-N-acetyl-alpha-D-glucosamine pocket. The active-site Proton donor is the C119. 2-(S-cysteinyl)pyruvic acid O-phosphothioketal is present on C119. UDP-N-acetyl-alpha-D-glucosamine-binding positions include 124 to 128, D311, and I333; that span reads RPVDQ.

The protein belongs to the EPSP synthase family. MurA subfamily.

It localises to the cytoplasm. It carries out the reaction phosphoenolpyruvate + UDP-N-acetyl-alpha-D-glucosamine = UDP-N-acetyl-3-O-(1-carboxyvinyl)-alpha-D-glucosamine + phosphate. It functions in the pathway cell wall biogenesis; peptidoglycan biosynthesis. Its function is as follows. Cell wall formation. Adds enolpyruvyl to UDP-N-acetylglucosamine. The sequence is that of UDP-N-acetylglucosamine 1-carboxyvinyltransferase from Polaromonas sp. (strain JS666 / ATCC BAA-500).